The chain runs to 564 residues: Esterase FE4 (564 aa).

An N-terminal signal peptide occupies residues 1–23; the sequence is MKNTCGILLNLFLFIGCFLTCSA. N-linked (GlcNAc...) asparagine glycosylation is present at asparagine 81. A disulfide bond links cysteine 89 and cysteine 106. Serine 214 acts as the Acyl-ester intermediate in catalysis. The cysteines at positions 266 and 277 are disulfide-linked. N-linked (GlcNAc...) asparagine glycosylation occurs at asparagine 269. The active-site Charge relay system is the glutamate 339. N-linked (GlcNAc...) asparagine glycosylation is found at asparagine 371, asparagine 404, and asparagine 443. Histidine 463 functions as the Charge relay system in the catalytic mechanism.

It belongs to the type-B carboxylesterase/lipase family.

The enzyme catalyses a carboxylic ester + H2O = an alcohol + a carboxylate + H(+). In terms of biological role, overproduction of nonspecific esterases is a common mechanism of resistance to organophosphate insecticides. This Myzus persicae (Green peach aphid) protein is Esterase FE4.